The following is a 304-amino-acid chain: UDP-N-acetylenolpyruvoylglucosamine reductase (304 aa).

The region spanning 33 to 212 is the FAD-binding PCMH-type domain; that stretch reads MGGLADLFLI…KEMMDDLTHK (180 aa). The active site involves Arg176. Ser226 (proton donor) is an active-site residue. Glu296 is an active-site residue.

This sequence belongs to the MurB family. FAD serves as cofactor.

The protein localises to the cytoplasm. The enzyme catalyses UDP-N-acetyl-alpha-D-muramate + NADP(+) = UDP-N-acetyl-3-O-(1-carboxyvinyl)-alpha-D-glucosamine + NADPH + H(+). It participates in cell wall biogenesis; peptidoglycan biosynthesis. Cell wall formation. This is UDP-N-acetylenolpyruvoylglucosamine reductase from Exiguobacterium sibiricum (strain DSM 17290 / CCUG 55495 / CIP 109462 / JCM 13490 / 255-15).